A 257-amino-acid polypeptide reads, in one-letter code: 5'-nucleotidase SurE (257 aa).

Positions 8, 9, 40, and 93 each coordinate a divalent metal cation.

This sequence belongs to the SurE nucleotidase family. A divalent metal cation serves as cofactor.

The protein localises to the cytoplasm. It catalyses the reaction a ribonucleoside 5'-phosphate + H2O = a ribonucleoside + phosphate. Its function is as follows. Nucleotidase that shows phosphatase activity on nucleoside 5'-monophosphates. The sequence is that of 5'-nucleotidase SurE from Phenylobacterium zucineum (strain HLK1).